Reading from the N-terminus, the 513-residue chain is ATP synthase subunit alpha (513 aa).

169-176 (GDRQCGKT) is an ATP binding site.

Belongs to the ATPase alpha/beta chains family. As to quaternary structure, F-type ATPases have 2 components, CF(1) - the catalytic core - and CF(0) - the membrane proton channel. CF(1) has five subunits: alpha(3), beta(3), gamma(1), delta(1), epsilon(1). CF(0) has three main subunits: a(1), b(2) and c(9-12). The alpha and beta chains form an alternating ring which encloses part of the gamma chain. CF(1) is attached to CF(0) by a central stalk formed by the gamma and epsilon chains, while a peripheral stalk is formed by the delta and b chains.

The protein localises to the cell inner membrane. The enzyme catalyses ATP + H2O + 4 H(+)(in) = ADP + phosphate + 5 H(+)(out). Produces ATP from ADP in the presence of a proton gradient across the membrane. The alpha chain is a regulatory subunit. This is ATP synthase subunit alpha from Burkholderia orbicola (strain AU 1054).